A 915-amino-acid chain; its full sequence is Isoleucine--tRNA ligase (915 aa).

The 'HIGH' region signature appears at 57-67 (PYANGNLHMGH). Glu-554 is a binding site for L-isoleucyl-5'-AMP. Positions 595 to 599 (KMSKS) match the 'KMSKS' region motif. Residue Lys-598 participates in ATP binding. Residues Cys-885, Cys-888, Cys-905, and Cys-908 each coordinate Zn(2+).

This sequence belongs to the class-I aminoacyl-tRNA synthetase family. IleS type 1 subfamily. As to quaternary structure, monomer. It depends on Zn(2+) as a cofactor.

The protein resides in the cytoplasm. The enzyme catalyses tRNA(Ile) + L-isoleucine + ATP = L-isoleucyl-tRNA(Ile) + AMP + diphosphate. Functionally, catalyzes the attachment of isoleucine to tRNA(Ile). As IleRS can inadvertently accommodate and process structurally similar amino acids such as valine, to avoid such errors it has two additional distinct tRNA(Ile)-dependent editing activities. One activity is designated as 'pretransfer' editing and involves the hydrolysis of activated Val-AMP. The other activity is designated 'posttransfer' editing and involves deacylation of mischarged Val-tRNA(Ile). This chain is Isoleucine--tRNA ligase, found in Staphylococcus carnosus (strain TM300).